The sequence spans 736 residues: Meiotic expression up-regulated protein 27 (736 aa).

This sequence belongs to the UPF0300 family.

The chain is Meiotic expression up-regulated protein 27 (meu27) from Schizosaccharomyces pombe (strain 972 / ATCC 24843) (Fission yeast).